The primary structure comprises 1089 residues: Importin subunit beta-3 (1089 aa).

Serine 2 is subject to N-acetylserine. HEAT repeat units lie at residues 6-39 (EEVN…EEWI), 44-78 (IEYL…ALKA), 96-129 (KEVL…IAEC), 138-165 (PELL…ILTT), 175-207 (INSI…YFKQ), 216-252 (LGIL…LVEL), 260-295 (MFDQ…FSEN), 304-359 (QNYG…ALKL), 361-395 (GEYL…SSAA), 399-439 (ADVL…STDF), 441-481 (PFIQ…FSEF), 484-524 (KDIL…AEAA), 526-568 (NKFI…GFAV), 571-613 (EKFH…CRIL), 615-689 (DDFV…ATLL), 692-735 (QFAV…LLAA), 742-781 (ELVL…IKVM), 788-849 (EDQL…LKTT), 852-890 (HYLK…IQYG), 898-930 (KNAF…CAQY), 938-978 (VCIP…LYAY), 986-1017 (DTYT…QLIE), 1028-1063 (NISA…LLGF), and 1066-1089 (SSDA…KWFA). Threonine 830 is subject to Phosphothreonine.

The protein belongs to the importin beta family. Importin beta-3 subfamily. Interacts with Ran (GSP1); interacts specifically with the GTP-bound form of Ran (GTP-Ran), protecting it from GTP hydrolysis and nucleotide exchange. Interacts with RPL25; this interaction is dissociated by binding to Ran-GTP. Interacts with YAP1; this interaction is dissociated by binding to Ran-GTP. Interacts with NOP1; via its rg-NLS. Interacts with SOF1; via its cNLS. Interacts with histones H3 and H4; via their NLS. Interacts with ABF1.

The protein localises to the cytoplasm. Its subcellular location is the nucleus. Its function is as follows. Functions in nuclear protein import as nuclear transport receptor. Serves as receptor for classical and arginine/glycine-rich nuclear localization signals (cNLS and rg-NLS) in cargo substrates. Its predominant cargo substrate seems to be ribosomal proteins and ribosome biogenesis trans- and cis-acting factors. Required for nuclear transport of YAP1, NOP1 and SOF1. Mediates the nuclear import of histones H3 and H4. Mediates docking of the importin/substrate complex to the nuclear pore complex (NPC) through binding to repeat-containing nucleoporins. The complex is subsequently translocated through the pore by an energy requiring, Ran-dependent mechanism. At the nucleoplasmic side of the NPC, GTP-Ran binding leads to release of the cargo. The importin is re-exported from the nucleus to the cytoplasm where GTP hydrolysis releases Ran from importin. The directionality of nuclear import is thought to be conferred by an asymmetric distribution of the GTP- and GDP-bound forms of Ran between the cytoplasm and nucleus. In terms of biological role, plays a role in protein secretion. In Saccharomyces cerevisiae (strain ATCC 204508 / S288c) (Baker's yeast), this protein is Importin subunit beta-3.